Reading from the N-terminus, the 80-residue chain is Cell division protein ZapB (80 aa).

Residues 3 to 80 (FEVFEKLEAK…ALLGKMNEVN (78 aa)) are a coiled coil.

Belongs to the ZapB family. Homodimer. The ends of the coiled-coil dimer bind to each other, forming polymers. Interacts with FtsZ.

The protein localises to the cytoplasm. Functionally, non-essential, abundant cell division factor that is required for proper Z-ring formation. It is recruited early to the divisome by direct interaction with FtsZ, stimulating Z-ring assembly and thereby promoting cell division earlier in the cell cycle. Its recruitment to the Z-ring requires functional FtsA or ZipA. This is Cell division protein ZapB from Edwardsiella ictaluri (strain 93-146).